The primary structure comprises 108 residues: Large ribosomal subunit protein uL24 (108 aa).

This sequence belongs to the universal ribosomal protein uL24 family. As to quaternary structure, part of the 50S ribosomal subunit.

In terms of biological role, one of two assembly initiator proteins, it binds directly to the 5'-end of the 23S rRNA, where it nucleates assembly of the 50S subunit. Its function is as follows. One of the proteins that surrounds the polypeptide exit tunnel on the outside of the subunit. The polypeptide is Large ribosomal subunit protein uL24 (Geotalea daltonii (strain DSM 22248 / JCM 15807 / FRC-32) (Geobacter daltonii)).